Consider the following 481-residue polypeptide: Glutamate--cysteine ligase (481 aa).

It belongs to the glutamate--cysteine ligase type 1 family. Type 1 subfamily.

The enzyme catalyses L-cysteine + L-glutamate + ATP = gamma-L-glutamyl-L-cysteine + ADP + phosphate + H(+). It functions in the pathway sulfur metabolism; glutathione biosynthesis; glutathione from L-cysteine and L-glutamate: step 1/2. The chain is Glutamate--cysteine ligase from Clostridium acetobutylicum (strain ATCC 824 / DSM 792 / JCM 1419 / IAM 19013 / LMG 5710 / NBRC 13948 / NRRL B-527 / VKM B-1787 / 2291 / W).